The following is a 214-amino-acid chain: External core antigen (214 aa).

The N-terminal stretch at 1 to 19 is a signal peptide; it reads MQLFHLCLIISCTCPTVQA. The interval 25-27 is HBEAG; sequence GWL. The disordered stretch occupies residues 165–214; that stretch reads NAPILSTLPETTVVRRRDRGRSPRRRTPSPRRRRSPSPRRRRSQSRESQC. The segment covering 178-207 has biased composition (basic residues); it reads VRRRDRGRSPRRRTPSPRRRRSPSPRRRRS. Residues 186 to 192 form a 1; half-length repeat; sequence SPRRRTP. Residues 186-208 form a 3 X 8 AA repeats of S-P-R-R-R-R-S-[PQ] region; it reads SPRRRTPSPRRRRSPSPRRRRSQ. A propeptide spanning residues 186–214 is cleaved from the precursor; that stretch reads SPRRRTPSPRRRRSPSPRRRRSQSRESQC. A run of 2 repeats spans residues 193-200 and 201-208.

It belongs to the orthohepadnavirus precore antigen family. In terms of assembly, homodimerizes. Phosphorylated. In terms of processing, cleaved by host furin.

Its subcellular location is the secreted. The protein localises to the host nucleus. Its function is as follows. May regulate immune response to the intracellular capsid in acting as a T-cell tolerogen, by having an immunoregulatory effect which prevents destruction of infected cells by cytotoxic T-cells. This immune regulation may predispose to chronicity during perinatal infections and prevent severe liver injury during adult infections. The sequence is that of External core antigen from Hepatitis B virus genotype A2 subtype adw2 (strain Rutter 1979) (HBV-A).